Consider the following 567-residue polypeptide: Proline--tRNA ligase (567 aa).

Belongs to the class-II aminoacyl-tRNA synthetase family. ProS type 1 subfamily. As to quaternary structure, homodimer.

It localises to the cytoplasm. It carries out the reaction tRNA(Pro) + L-proline + ATP = L-prolyl-tRNA(Pro) + AMP + diphosphate. Catalyzes the attachment of proline to tRNA(Pro) in a two-step reaction: proline is first activated by ATP to form Pro-AMP and then transferred to the acceptor end of tRNA(Pro). As ProRS can inadvertently accommodate and process non-cognate amino acids such as alanine and cysteine, to avoid such errors it has two additional distinct editing activities against alanine. One activity is designated as 'pretransfer' editing and involves the tRNA(Pro)-independent hydrolysis of activated Ala-AMP. The other activity is designated 'posttransfer' editing and involves deacylation of mischarged Ala-tRNA(Pro). The misacylated Cys-tRNA(Pro) is not edited by ProRS. The protein is Proline--tRNA ligase of Staphylococcus aureus (strain Mu3 / ATCC 700698).